An 83-amino-acid polypeptide reads, in one-letter code: Small ribosomal subunit protein bS18A (83 aa).

Belongs to the bacterial ribosomal protein bS18 family. As to quaternary structure, part of the 30S ribosomal subunit. Forms a tight heterodimer with protein bS6.

Binds as a heterodimer with protein bS6 to the central domain of the 16S rRNA, where it helps stabilize the platform of the 30S subunit. The polypeptide is Small ribosomal subunit protein bS18A (Nocardia farcinica (strain IFM 10152)).